The chain runs to 397 residues: DNA-directed RNA polymerase subunit Rpo1C (397 aa).

It belongs to the RNA polymerase beta' chain family. In terms of assembly, part of the RNA polymerase complex.

The protein localises to the cytoplasm. The enzyme catalyses RNA(n) + a ribonucleoside 5'-triphosphate = RNA(n+1) + diphosphate. Its function is as follows. DNA-dependent RNA polymerase (RNAP) catalyzes the transcription of DNA into RNA using the four ribonucleoside triphosphates as substrates. Forms part of the jaw domain. The polypeptide is DNA-directed RNA polymerase subunit Rpo1C (Methanococcus aeolicus (strain ATCC BAA-1280 / DSM 17508 / OCM 812 / Nankai-3)).